The chain runs to 466 residues: Asparagine--tRNA ligase (466 aa).

Belongs to the class-II aminoacyl-tRNA synthetase family. As to quaternary structure, homodimer.

Its subcellular location is the cytoplasm. It catalyses the reaction tRNA(Asn) + L-asparagine + ATP = L-asparaginyl-tRNA(Asn) + AMP + diphosphate + H(+). In Aeromonas hydrophila subsp. hydrophila (strain ATCC 7966 / DSM 30187 / BCRC 13018 / CCUG 14551 / JCM 1027 / KCTC 2358 / NCIMB 9240 / NCTC 8049), this protein is Asparagine--tRNA ligase.